Reading from the N-terminus, the 371-residue chain is MVNNKKKTSSTFNVQVADFIRNHKKEGVAVDDEVTEKLVIPFELEAEQIDDLLERLTDGGISITDREGNPSTKYAVEEIKPEELTDEELLGSNSAKVNDPVRMYLKEIGVVPLLTNEEEKELAIAVENGDLEAKQRLAEANLRLVVSIAKRYVGRGMQFLDLIQEGNMGLMKAVDKFDYSKGFKFSTYATWWIRQAITRAIADQARTIRIPVHMVETINKLVREQRNLLQELGQDPTPEQIAERMDMTPDKVREILKIAQEPVSLETPIGEEDDSHLGDFIEDEVIENPVDYTTRVVLREQLDEVLDTLTDREENVLRLRFGLDDGKMRTLEDVGKVFDVTRERIRQIEAKALRKLRHPSRSKQLRDFVED.

The sigma-70 factor domain-2 stretch occupies residues 137 to 207 (LAEANLRLVV…TRAIADQART (71 aa)). The Interaction with polymerase core subunit RpoC motif lies at 161-164 (DLIQ). Positions 216–292 (ETINKLVREQ…DEVIENPVDY (77 aa)) are sigma-70 factor domain-3. The interval 305–358 (VLDTLTDREENVLRLRFGLDDGKMRTLEDVGKVFDVTRERIRQIEAKALRKLRH) is sigma-70 factor domain-4. A DNA-binding region (H-T-H motif) is located at residues 331-350 (LEDVGKVFDVTRERIRQIEA).

It belongs to the sigma-70 factor family. RpoD/SigA subfamily. As to quaternary structure, interacts transiently with the RNA polymerase catalytic core.

It localises to the cytoplasm. Its function is as follows. Sigma factors are initiation factors that promote the attachment of RNA polymerase to specific initiation sites and are then released. This sigma factor is the primary sigma factor during exponential growth. The polypeptide is RNA polymerase sigma factor SigA (Streptococcus mutans serotype c (strain ATCC 700610 / UA159)).